Consider the following 143-residue polypeptide: Large ribosomal subunit protein uL11 (143 aa).

This sequence belongs to the universal ribosomal protein uL11 family. In terms of assembly, part of the ribosomal stalk of the 50S ribosomal subunit. Interacts with L10 and the large rRNA to form the base of the stalk. L10 forms an elongated spine to which L12 dimers bind in a sequential fashion forming a multimeric L10(L12)X complex. In terms of processing, one or more lysine residues are methylated.

Functionally, forms part of the ribosomal stalk which helps the ribosome interact with GTP-bound translation factors. In Albidiferax ferrireducens (strain ATCC BAA-621 / DSM 15236 / T118) (Rhodoferax ferrireducens), this protein is Large ribosomal subunit protein uL11.